The chain runs to 265 residues: Undecaprenyl-diphosphatase (265 aa).

7 helical membrane-spanning segments follow: residues 41-61 (IAYT…LIYF), 75-95 (LKFL…LYVI), 104-124 (YNPS…GIYI), 137-157 (LSTK…LPGV), 180-200 (YSYL…LLFT), 215-235 (GIAL…GFLL), and 244-264 (YLID…GLII).

It belongs to the UppP family.

Its subcellular location is the cell membrane. It carries out the reaction di-trans,octa-cis-undecaprenyl diphosphate + H2O = di-trans,octa-cis-undecaprenyl phosphate + phosphate + H(+). Functionally, catalyzes the dephosphorylation of undecaprenyl diphosphate (UPP). This is Undecaprenyl-diphosphatase from Saccharolobus islandicus (strain Y.G.57.14 / Yellowstone #1) (Sulfolobus islandicus).